Reading from the N-terminus, the 1021-residue chain is Receptor-like protein EIX2 (1021 aa).

An N-terminal signal peptide occupies residues 1–24 (MGKRTNPRHFLVTWSLLLLETAFG). An N-cap region spans residues 25–109 (LTSREVNKTL…PILTGKVSPS (85 aa)). The Extracellular portion of the chain corresponds to 25–963 (LTSREVNKTL…DDDDEFSSLE (939 aa)). Residue Asn-31 is glycosylated (N-linked (GlcNAc...) asparagine). LRR repeat units follow at residues 113-136 (LEYL…RFIG), 138-161 (LKRL…QFQN), 162-184 (LTSL…VWLS), 186-211 (LSSL…ITKV), 214-237 (LKEL…VANS), and 239-262 (LISL…SWLF). 2 N-linked (GlcNAc...) asparagine glycosylation sites follow: Asn-145 and Asn-161. Asn-236 carries an N-linked (GlcNAc...) asparagine glycan. Asn-263 carries N-linked (GlcNAc...) asparagine glycosylation. 14 LRR repeats span residues 265–288 (STSL…RFGS), 290–313 (MYLE…SFGN), 314–337 (LTRL…LFLR), 342–365 (RKSL…VTRF), 366–388 (SSLK…RVGQ), 389–412 (VSSL…LALF), 413–436 (PSLR…IGKL), 437–459 (SQLR…MGQL), 461–483 (NLER…HFSN), 484–507 (LSSL…DWVP), 509–532 (FQLQ…LQTQ), 533–555 (NNYT…WFSN), 557–581 (PPEL…IVSK), and 583–607 (DYMI…NIQI). The N-linked (GlcNAc...) asparagine glycan is linked to Asn-313. The N-linked (GlcNAc...) asparagine glycan is linked to Asn-483. 4 N-linked (GlcNAc...) asparagine glycosylation sites follow: Asn-534, Asn-544, Asn-564, and Asn-593. An LRR 21; degenerate repeat occupies 608–626 (FYLHKNHFSGSISSICRNT). 6 LRR repeats span residues 627–651 (IGAA…WMNM), 652–675 (SNLA…LGSL), 677–698 (NLEA…FSQC), 699–722 (QLLQ…IGTD), 723–747 (LLQL…ICQL), and 749–773 (FLQI…NFTI). Residues Asn-650 and Asn-663 are each glycosylated (N-linked (GlcNAc...) asparagine). 2 N-linked (GlcNAc...) asparagine glycosylation sites follow: Asn-770 and Asn-778. 4 LRR repeats span residues 818-842 (LLYL…IAEM), 843-866 (RGLR…IGQM), 867-890 (KLLE…LSNL), and 892-913 (FLSV…STQL). 3 N-linked (GlcNAc...) asparagine glycosylation sites follow: Asn-849, Asn-856, and Asn-889. The C-cap/acidic domain stretch occupies residues 914–963 (QSFDRSSYSGNAQLCGPPLEECPGYAPPIDRGSNTNPQEHDDDDEFSSLE). The chain crosses the membrane as a helical span at residues 964 to 984 (FYVSMVLGFFVTFWGILGCLI). Residues 985–1021 (VNRSWRNAYFTFLTDMKSWLHMTSRVCFARLKGKLRN) are Cytoplasmic-facing.

This sequence belongs to the RLP family. As to quaternary structure, interacts with EIX elicitor protein.

It localises to the cell membrane. In terms of biological role, involved in plant defense. Confers resistance to the fungal pathogen T.viride through recognition of the EIX elicitor protein. This Solanum lycopersicum (Tomato) protein is Receptor-like protein EIX2.